We begin with the raw amino-acid sequence, 104 residues long: Large ribosomal subunit protein bL21c (104 aa).

The protein belongs to the bacterial ribosomal protein bL21 family. As to quaternary structure, part of the 50S ribosomal subunit.

It localises to the plastid. Its subcellular location is the chloroplast. Functionally, this protein binds to 23S rRNA. The chain is Large ribosomal subunit protein bL21c from Porphyra purpurea (Red seaweed).